Here is a 369-residue protein sequence, read N- to C-terminus: Peptidyl-prolyl cis-trans isomerase D (369 aa).

The PPIase cyclophilin-type domain occupies 7-175 (YFDISCNGKP…EDWKIADCGE (169 aa)). TPR repeat units lie at residues 217–250 (VSKI…LNDY), 268–301 (LSCY…EQID), and 306–339 (TKAL…EPND).

The protein belongs to the cyclophilin-type PPIase family. PPIase D subfamily.

The protein localises to the cytoplasm. It carries out the reaction [protein]-peptidylproline (omega=180) = [protein]-peptidylproline (omega=0). Its function is as follows. PPIases accelerate the folding of proteins. It catalyzes the cis-trans isomerization of proline imidic peptide bonds in oligopeptides. The protein is Peptidyl-prolyl cis-trans isomerase D (CPR6) of Candida albicans (strain SC5314 / ATCC MYA-2876) (Yeast).